Reading from the N-terminus, the 414-residue chain is Transcription factor FAMA (414 aa).

2 disordered regions span residues 1–61 and 142–197; these read MDKD…TPFD and KEDQ…SQRM. Low complexity-rich tracts occupy residues 12–24 and 35–49; these read GESSGGNDDNSSG and QQQQKQSMPQQQQHQ. Residues 166–175 show a composition bias toward basic and acidic residues; sequence RENKNVTKKE. The span at 176–185 shows a compositional bias: basic residues; the sequence is VKSKRKRART. Residues 187–197 show a composition bias toward basic and acidic residues; that stretch reads KTSEEVESQRM. One can recognise a bHLH domain in the interval 194-245; sequence SQRMTHIAVERNRRKQMNEHLRVLRSLMPGSYVQRGDQASIIGGAIEFVREL. The LxCxE motif motif lies at 249–253; it reads LQCLE.

In terms of assembly, interacts with FAMA through its LxCxE motif. Self-interacts. Also interacts with bHLH071 and bHLH093. Interacts with RBR1. In terms of tissue distribution, resctricted to stomatal cell lineages (at protein level). Expressed in roots, leaves, stems, and flowers.

The protein resides in the nucleus. In terms of biological role, transcription activator. Together with MYB88 and MYB124, ensures that stomata contain just two guard cells (GCs) by enforcing a single symmetric precursor cell division before stomatal maturity. Together with SPCH and MUTE, regulates the stomata formation. Required to promote differentiation and morphogenesis of stomatal guard cells and to halt proliferative divisions in their immediate precursors. Mediates the formation of stomata. Prevents histone H3K27me3 marks and derepresses stem cell gene expression. In Arabidopsis thaliana (Mouse-ear cress), this protein is Transcription factor FAMA (FAMA).